We begin with the raw amino-acid sequence, 329 residues long: Aspartate--ammonia ligase (329 aa).

It belongs to the class-II aminoacyl-tRNA synthetase family. AsnA subfamily.

The protein localises to the cytoplasm. The enzyme catalyses L-aspartate + NH4(+) + ATP = L-asparagine + AMP + diphosphate + H(+). Its pathway is amino-acid biosynthesis; L-asparagine biosynthesis; L-asparagine from L-aspartate (ammonia route): step 1/1. The protein is Aspartate--ammonia ligase of Ureaplasma urealyticum serovar 10 (strain ATCC 33699 / Western).